Here is a 502-residue protein sequence, read N- to C-terminus: Putative ZDHHC-type palmitoyltransferase 3 (502 aa).

A disordered region spans residues 1 to 80 (MVNNNNKNNK…ESTNENNKKL (80 aa)). Residues 10–30 (KINDRENEENEKNKKKDKIYE) are compositionally biased toward basic and acidic residues. Residues 31–52 (NKIGINENNNENNNYQNENFIY) show a composition bias toward low complexity. Residue Asn-58 is glycosylated (N-linked (GlcNAc...) asparagine). Residues 59–73 (DTQEGDISEIQEEST) show a composition bias toward acidic residues. 2 consecutive transmembrane segments (helical) span residues 104-124 (FFIVTQIFILVPSLFFEIKLV) and 134-154 (LEISNYIITLTLLVFIFYNLY). A disordered region spans residues 200–281 (IANDDPISSS…NNNNNNNKNQ (82 aa)). The span at 203 to 212 (DDPISSSSDF) shows a compositional bias: low complexity. A compositionally biased stretch (acidic residues) spans 213-222 (SDSDDDDQDE). Positions 248 to 280 (NSNNNNSNNNNNNNKNRNRNNNNNNNNNNNNKN) are enriched in low complexity. Residues Asn-252 and Asn-280 are each glycosylated (N-linked (GlcNAc...) asparagine). Residues 299–349 (KFCITCGLYREPRSFHCSTCNNCVENFDHHCVWIGNCIGRRNYREFFYFIT) enclose the DHHC domain. Catalysis depends on Cys-329, which acts as the S-palmitoyl cysteine intermediate. Residues 344–364 (FFYFITTTLIYALYLLSMSIV) traverse the membrane as a helical segment. 3 N-linked (GlcNAc...) asparagine glycosylation sites follow: Asn-371, Asn-388, and Asn-393. A helical transmembrane segment spans residues 419–439 (GLCIFIIIFGFIMSLLLGFLV). Asn-449, Asn-483, and Asn-494 each carry an N-linked (GlcNAc...) asparagine glycan.

It belongs to the DHHC palmitoyltransferase family.

It is found in the membrane. It carries out the reaction L-cysteinyl-[protein] + hexadecanoyl-CoA = S-hexadecanoyl-L-cysteinyl-[protein] + CoA. The protein is Putative ZDHHC-type palmitoyltransferase 3 of Dictyostelium discoideum (Social amoeba).